A 344-amino-acid polypeptide reads, in one-letter code: L-rhamnose-proton symporter (344 aa).

10 helical membrane passes run 4 to 24, 38 to 58, 68 to 88, 101 to 121, 137 to 157, 175 to 195, 214 to 234, 259 to 279, 290 to 310, and 321 to 341; these read AITMGIFWHLIGAASAACFYA, WSVGGIVSWLILPWAISALLL, FNLSTLLPVFLFGAMWGIGNI, MGIGIAIGITLIVGTLMTPII, TLLGVFVALIGVGIVTRAGQL, LLLAVMCGIFSAGMSFAMNAA, LPSYVVIMGGGALVNLGFCFI, ILLSALGGLMWYLQFFFYAWG, MSWMLHMSFYVLCGGLVGLVL, and VAVLSLGCVVIIIAANIVGLG.

Belongs to the L-rhamnose transporter (TC 2.A.7.6) family.

The protein resides in the cell inner membrane. It catalyses the reaction L-rhamnopyranose(in) + H(+)(in) = L-rhamnopyranose(out) + H(+)(out). Its function is as follows. Uptake of L-rhamnose across the cytoplasmic membrane with the concomitant transport of protons into the cell (symport system). The protein is L-rhamnose-proton symporter of Salmonella gallinarum (strain 287/91 / NCTC 13346).